A 209-amino-acid chain; its full sequence is Large ribosomal subunit protein uL3 (209 aa).

The interval 113 to 155 is disordered; the sequence is TSRGHGYQGNIKRHHQSRGPETHGSRYHRIPGSMGSIINRVPK.

It belongs to the universal ribosomal protein uL3 family. In terms of assembly, part of the 50S ribosomal subunit. Forms a cluster with proteins L14 and L19.

In terms of biological role, one of the primary rRNA binding proteins, it binds directly near the 3'-end of the 23S rRNA, where it nucleates assembly of the 50S subunit. The sequence is that of Large ribosomal subunit protein uL3 from Lactobacillus delbrueckii subsp. bulgaricus (strain ATCC 11842 / DSM 20081 / BCRC 10696 / JCM 1002 / NBRC 13953 / NCIMB 11778 / NCTC 12712 / WDCM 00102 / Lb 14).